Reading from the N-terminus, the 308-residue chain is MAAARISFSSTSRTSYYRHSPFLGPKPTPTTPSVYPITPFSPNLGSILRCRRRPSFTVCFVLEDDKFKTQFEAGEEDIEMKIEEQISATRLAEKLARKKSERFTYLVAAVMSSFGITSMAVMAVYYRFYWQMEGGEVPFSEMFGTFALSVGAAVGMEFWARWAHKALWHASLWHMHESHHKPREGPFELNDVFAIINAVPAIALLDYGFFHKGLIPGLCFGAGLGITVFGMAYMFVHDGLVHKRFPVGPVANVPYLRKVAAAHSLHHSEKFNGVPYGLFLGPKELEEVGGLEELEKEVNRRTRYIKGS.

Residues 1–59 (MAAARISFSSTSRTSYYRHSPFLGPKPTPTTPSVYPITPFSPNLGSILRCRRRPSFTVC) constitute a chloroplast transit peptide. 2 consecutive transmembrane segments (helical) span residues 105–125 (YLVA…MAVY) and 139–159 (FSEM…MEFW). The region spanning 152–279 (AAVGMEFWAR…KFNGVPYGLF (128 aa)) is the Fatty acid hydroxylase domain. The Histidine box-1 signature appears at 164-169 (HKALWH). Residues 176–180 (HESHH) carry the Histidine box-2 motif. 2 helical membrane-spanning segments follow: residues 191-211 (DVFA…GFFH) and 215-235 (IPGL…AYMF). Residues 237-242 (HDGLVH) carry the Histidine box-3 motif. The Histidine box-4 signature appears at 263 to 267 (HSLHH).

It belongs to the sterol desaturase family.

It is found in the plastid. The protein resides in the chloroplast membrane. It carries out the reaction all-trans-beta-carotene + 4 reduced [2Fe-2S]-[ferredoxin] + 2 O2 + 4 H(+) = all-trans-zeaxanthin + 4 oxidized [2Fe-2S]-[ferredoxin] + 2 H2O. It catalyses the reaction all-trans-beta-carotene + 2 reduced [2Fe-2S]-[ferredoxin] + O2 + 2 H(+) = beta-cryptoxanthin + 2 oxidized [2Fe-2S]-[ferredoxin] + H2O. The catalysed reaction is beta-cryptoxanthin + 2 reduced [2Fe-2S]-[ferredoxin] + O2 + 2 H(+) = all-trans-zeaxanthin + 2 oxidized [2Fe-2S]-[ferredoxin] + H2O. Inhibited by o-phenanthroline and 8-hydroxyquinoline. Its function is as follows. Nonheme diiron monooxygenase involved in the biosynthesis of xanthophylls. Specific for beta-ring hydroxylations of beta-carotene. Produces beta-cryptoxanthin and zeaxanthin. Uses ferredoxin as an electron donor. This is Beta-carotene hydroxylase 2, chloroplastic from Capsicum annuum (Capsicum pepper).